The sequence spans 199 residues: Recombination protein RecR (199 aa).

The C4-type zinc finger occupies 57 to 72 (CQSCRTFTEETYCPIC). Positions 81 to 176 (EVICVVETPA…TVSRIAHGVP (96 aa)) constitute a Toprim domain.

Belongs to the RecR family.

In terms of biological role, may play a role in DNA repair. It seems to be involved in an RecBC-independent recombinational process of DNA repair. It may act with RecF and RecO. The protein is Recombination protein RecR of Shewanella pealeana (strain ATCC 700345 / ANG-SQ1).